The primary structure comprises 274 residues: NH(3)-dependent NAD(+) synthetase (274 aa).

Gly-46–Ser-53 provides a ligand contact to ATP. Mg(2+) is bound at residue Asp-52. Arg-140 contacts deamido-NAD(+). ATP is bound at residue Thr-160. Residue Glu-165 coordinates Mg(2+). Residues Lys-173 and Asp-180 each coordinate deamido-NAD(+). ATP contacts are provided by Lys-189 and Thr-211. His-260–Lys-261 contributes to the deamido-NAD(+) binding site.

This sequence belongs to the NAD synthetase family. In terms of assembly, homodimer.

It catalyses the reaction deamido-NAD(+) + NH4(+) + ATP = AMP + diphosphate + NAD(+) + H(+). It participates in cofactor biosynthesis; NAD(+) biosynthesis; NAD(+) from deamido-NAD(+) (ammonia route): step 1/1. Its function is as follows. Catalyzes the ATP-dependent amidation of deamido-NAD to form NAD. Uses ammonia as a nitrogen source. The sequence is that of NH(3)-dependent NAD(+) synthetase from Lactococcus lactis subsp. cremoris (strain SK11).